Consider the following 476-residue polypeptide: Zinc finger protein 563 (476 aa).

One can recognise a KRAB domain in the interval 4 to 96 (VAFEDVAVNF…IRDSIVNNSI (93 aa)). A C2H2-type 1; degenerate zinc finger spans residues 101-125 (DPCQSAECEEVIMGHLSLNSHIRVD). The C2H2-type 2; degenerate zinc-finger motif lies at 169–191 (YECKECGKTFSSRRNLRRHMVVQ). 10 C2H2-type zinc fingers span residues 197–219 (YKCK…ERTH), 225–247 (YECK…ERMH), 253–275 (YECK…ERTH), 281–303 (YTCK…ETTH), 309–331 (YECK…MKRH), 337–359 (HKCK…ERIH), 365–387 (YECK…MIMH), 393–415 (HKCK…EKSH), 421–443 (YECK…MVMH), and 449–471 (NKCK…EKTH).

It belongs to the krueppel C2H2-type zinc-finger protein family.

It localises to the nucleus. In terms of biological role, may be involved in transcriptional regulation. The protein is Zinc finger protein 563 (ZNF563) of Homo sapiens (Human).